A 315-amino-acid polypeptide reads, in one-letter code: Oxalate oxidoreductase subunit delta (315 aa).

4Fe-4S ferredoxin-type domains follow at residues 252 to 280 (QRPI…TRTE) and 281 to 310 (EGPV…NVPE). The [4Fe-4S] cluster site is built by Cys261, Cys264, Cys267, Cys271, Cys290, Cys293, Cys296, and Cys300.

As to quaternary structure, dimer of heterotrimer of one alpha, one beta and one delta subunit. [4Fe-4S] cluster is required as a cofactor.

The enzyme catalyses oxidized 2[4Fe-4S]-[ferredoxin] + oxalate = reduced 2[4Fe-4S]-[ferredoxin] + 2 CO2. In terms of biological role, catalyzes the anaerobic oxidation of oxalate using a broad range of electron acceptors, including ferredoxin and the nickel-dependent carbon monoxide dehydrogenase. Does not require coenzyme A as cosubstrate. Enables anaerobic growth on oxalate which is used as energy source by the bacteria. The polypeptide is Oxalate oxidoreductase subunit delta (Moorella thermoacetica (strain ATCC 39073 / JCM 9320)).